The chain runs to 536 residues: Phosphoenolpyruvate carboxykinase (ATP) (536 aa).

Residues Arg-61, Tyr-195, and Lys-201 each coordinate substrate. ATP contacts are provided by residues Lys-201, His-220, and 236–244; that span reads GLSGTGKTT. 2 residues coordinate Mn(2+): Lys-201 and His-220. Asp-257 contributes to the Mn(2+) binding site. The ATP site is built by Glu-285, Arg-322, and Thr-447. Substrate is bound at residue Arg-322.

Belongs to the phosphoenolpyruvate carboxykinase (ATP) family. Mn(2+) serves as cofactor.

The protein localises to the cytoplasm. It catalyses the reaction oxaloacetate + ATP = phosphoenolpyruvate + ADP + CO2. It participates in carbohydrate biosynthesis; gluconeogenesis. Involved in the gluconeogenesis. Catalyzes the conversion of oxaloacetate (OAA) to phosphoenolpyruvate (PEP) through direct phosphoryl transfer between the nucleoside triphosphate and OAA. This Rhizobium rhizogenes (strain K84 / ATCC BAA-868) (Agrobacterium radiobacter) protein is Phosphoenolpyruvate carboxykinase (ATP).